Consider the following 136-residue polypeptide: Large-conductance mechanosensitive channel (136 aa).

Helical transmembrane passes span 10 to 30 and 76 to 96; these read FAMR…AAFG and GVFI…FMAI.

Belongs to the MscL family. In terms of assembly, homopentamer.

The protein resides in the cell inner membrane. Functionally, channel that opens in response to stretch forces in the membrane lipid bilayer. May participate in the regulation of osmotic pressure changes within the cell. The polypeptide is Large-conductance mechanosensitive channel (Shigella boydii serotype 18 (strain CDC 3083-94 / BS512)).